The primary structure comprises 567 residues: Microtubule-associated protein 70-1 (567 aa).

Residues 38–341 (VRVELTRLEN…AARSEAQLKD (304 aa)) are a coiled coil. The interval 220-440 (ILDRMHRQKV…SGMNVSTDSS (221 aa)) is required for targeting to microtubules. Disordered regions lie at residues 425-457 (KGHV…EFTS) and 534-567 (LEKE…ARNM). Residues 440-453 (SEDKESNNSDEKAN) show a composition bias toward basic and acidic residues. Positions 516–545 (KKRRMEVAAMEKEMAALRLEKEQDNKAKRF) form a coiled coil.

This sequence belongs to the MAP70 family.

The protein resides in the cytoplasm. The protein localises to the cytoskeleton. In terms of biological role, plant-specific protein that interact with microtubules. The chain is Microtubule-associated protein 70-1 (MAP70.1) from Oryza sativa subsp. japonica (Rice).